The sequence spans 266 residues: Apolipoprotein A-I (266 aa).

An N-terminal signal peptide occupies residues 1 to 18 (MKAVVLTLAVLFLTGSQA). 2 consecutive repeat copies span residues 67–88 (LKLL…EQLG) and 89–110 (PVTQ…QEMN). The segment at 67 to 266 (LKLLDNWDSL…EEASKKLNAQ (200 aa)) is 10 X approximate tandem repeats. A Methionine sulfoxide modification is found at methionine 109. The stretch at 111–121 (KDVEEMKTKVQ) is one 3; half-length repeat. 5 tandem repeats follow at residues 122-143 (PYLD…QKVE), 144-165 (PLGS…EKLS), 166-187 (PLGE…TQLA), 188-209 (PYSE…ESGG), and 210-231 (ASLA…EKAK). A 9; half-length repeat occupies 232-242 (PALEDLRQGLL). Copy 10 of the repeat occupies 243–266 (PVLESFKVSLLSALEEASKKLNAQ).

It belongs to the apolipoprotein A1/A4/E family. In terms of assembly, homodimer. Interacts with APOA1BP and CLU. Component of a sperm activating protein complex (SPAP), consisting of APOA1, an immunoglobulin heavy chain, an immunoglobulin light chain and albumin. Interacts with NDRG1. Interacts with SCGB3A2. Interacts with NAXE and YJEFN3. Post-translationally, glycosylated. In terms of processing, palmitoylated. Phosphorylation sites are present in the extracellular medium. In terms of tissue distribution, major protein of plasma HDL, also found in chylomicrons.

It localises to the secreted. Participates in the reverse transport of cholesterol from tissues to the liver for excretion by promoting cholesterol efflux from tissues and by acting as a cofactor for the lecithin cholesterol acyltransferase (LCAT). As part of the SPAP complex, activates spermatozoa motility. The chain is Apolipoprotein A-I (APOA1) from Carlito syrichta (Philippine tarsier).